The primary structure comprises 61 residues: Photosystem II reaction center protein K (61 aa).

A propeptide spanning residues 1 to 24 (MPNIFSLICICLNSALQPSGFFFA) is cleaved from the precursor. A helical membrane pass occupies residues 36 to 56 (IVDFMPVIPVLFFLLAFVWQA).

This sequence belongs to the PsbK family. In terms of assembly, PSII is composed of 1 copy each of membrane proteins PsbA, PsbB, PsbC, PsbD, PsbE, PsbF, PsbH, PsbI, PsbJ, PsbK, PsbL, PsbM, PsbT, PsbX, PsbY, PsbZ, Psb30/Ycf12, at least 3 peripheral proteins of the oxygen-evolving complex and a large number of cofactors. It forms dimeric complexes.

It is found in the plastid. The protein resides in the chloroplast thylakoid membrane. Its function is as follows. One of the components of the core complex of photosystem II (PSII). PSII is a light-driven water:plastoquinone oxidoreductase that uses light energy to abstract electrons from H(2)O, generating O(2) and a proton gradient subsequently used for ATP formation. It consists of a core antenna complex that captures photons, and an electron transfer chain that converts photonic excitation into a charge separation. The sequence is that of Photosystem II reaction center protein K from Nymphaea alba (White water-lily).